The chain runs to 98 residues: Small ribosomal subunit protein eS24 (98 aa).

It belongs to the eukaryotic ribosomal protein eS24 family.

The chain is Small ribosomal subunit protein eS24 from Thermococcus onnurineus (strain NA1).